The following is a 347-amino-acid chain: WAT1-related protein At4g15540 (347 aa).

Helical transmembrane passes span V15 to Y35, V47 to F67, L73 to T93, T108 to F128, A139 to L159, W178 to L198, I210 to L230, G243 to I263, I276 to G296, and L299 to W319. Residues G30 to V158 form the EamA 1 domain. Positions Y216–V317 constitute an EamA 2 domain.

It belongs to the drug/metabolite transporter (DMT) superfamily. Plant drug/metabolite exporter (P-DME) (TC 2.A.7.4) family.

It localises to the membrane. The polypeptide is WAT1-related protein At4g15540 (Arabidopsis thaliana (Mouse-ear cress)).